The following is a 644-amino-acid chain: Exoribonuclease 2 (644 aa).

The RNB domain occupies arginine 189–lysine 516. In terms of domain architecture, S1 motif spans aspartate 561–valine 643.

This sequence belongs to the RNR ribonuclease family. RNase II subfamily.

The protein resides in the cytoplasm. The catalysed reaction is Exonucleolytic cleavage in the 3'- to 5'-direction to yield nucleoside 5'-phosphates.. Involved in mRNA degradation. Hydrolyzes single-stranded polyribonucleotides processively in the 3' to 5' direction. In Escherichia coli O139:H28 (strain E24377A / ETEC), this protein is Exoribonuclease 2.